A 245-amino-acid chain; its full sequence is Uridylate kinase (245 aa).

12 to 15 provides a ligand contact to ATP; sequence KLSG. Residues 20-25 are involved in allosteric activation by GTP; that stretch reads GEKGVG. Glycine 54 contributes to the UMP binding site. ATP is bound by residues glycine 55 and arginine 59. Residues aspartate 74 and 135–142 each bind UMP; that span reads IGSPYFST. Residues asparagine 163, tyrosine 169, and aspartate 172 each coordinate ATP.

It belongs to the UMP kinase family. Homohexamer.

It localises to the cytoplasm. It catalyses the reaction UMP + ATP = UDP + ADP. The protein operates within pyrimidine metabolism; CTP biosynthesis via de novo pathway; UDP from UMP (UMPK route): step 1/1. Its activity is regulated as follows. Allosterically activated by GTP. Inhibited by UTP. Its function is as follows. Catalyzes the reversible phosphorylation of UMP to UDP. This Streptococcus thermophilus (strain ATCC BAA-250 / LMG 18311) protein is Uridylate kinase.